Here is a 221-residue protein sequence, read N- to C-terminus: Transmembrane protein 267 (221 aa).

5 helical membrane-spanning segments follow: residues Ala-28–Ile-48, Leu-57–Leu-77, Val-86–Ser-106, Leu-121–Cys-141, and Ile-182–Leu-204.

It is found in the membrane. The sequence is that of Transmembrane protein 267 (tmem267) from Danio rerio (Zebrafish).